A 119-amino-acid polypeptide reads, in one-letter code: MLYTGTDIIEIRRIKAAEARWGEHFLNRIFTPAELSLCKDRFPSLAARFAAKEAVIKVLSLPKNQSYTEIETLNLPEGQPSVNLYGQARDKANILGIKHLSISLSHCREYAIAMVVAQD.

Asp7 and Glu53 together coordinate Mg(2+).

The protein belongs to the P-Pant transferase superfamily. AcpS family. It depends on Mg(2+) as a cofactor.

The protein localises to the cytoplasm. The enzyme catalyses apo-[ACP] + CoA = holo-[ACP] + adenosine 3',5'-bisphosphate + H(+). Its function is as follows. Transfers the 4'-phosphopantetheine moiety from coenzyme A to a Ser of acyl-carrier-protein. This is Holo-[acyl-carrier-protein] synthase from Dehalococcoides mccartyi (strain CBDB1).